The chain runs to 404 residues: Chorismate synthase (404 aa).

The NADP(+) site is built by arginine 40 and arginine 46. Residues 136–138, 257–258, glycine 301, 316–320, and arginine 342 each bind FMN; these read RAS, QA, and KPIST.

This sequence belongs to the chorismate synthase family. Homotetramer. FMNH2 serves as cofactor.

It catalyses the reaction 5-O-(1-carboxyvinyl)-3-phosphoshikimate = chorismate + phosphate. The protein operates within metabolic intermediate biosynthesis; chorismate biosynthesis; chorismate from D-erythrose 4-phosphate and phosphoenolpyruvate: step 7/7. Its function is as follows. Catalyzes the anti-1,4-elimination of the C-3 phosphate and the C-6 proR hydrogen from 5-enolpyruvylshikimate-3-phosphate (EPSP) to yield chorismate, which is the branch point compound that serves as the starting substrate for the three terminal pathways of aromatic amino acid biosynthesis. This reaction introduces a second double bond into the aromatic ring system. The polypeptide is Chorismate synthase (Mycolicibacterium vanbaalenii (strain DSM 7251 / JCM 13017 / BCRC 16820 / KCTC 9966 / NRRL B-24157 / PYR-1) (Mycobacterium vanbaalenii)).